The primary structure comprises 239 residues: MKEVILDAQARTVGSKGDLAFLRKSGKIPAIFYGKGIKPEAIAVSSKVFVSIMEANGANVIINLNFKDGKKAAIVKSLDRDFLTQHTIHIDFHAISLEDKIEVLVPVHIAGVADGVKNFGGVMEFIVREVKVEAIPRNIPQKISVDVKALRIGQGITVADLPELDGVKYVQDSSTLIVHVIAVAAVFEEEKPEAMAGGTATVVQPEVIISKGKKDKEDEEAEKGTSVASPTTATGGTKK.

The disordered stretch occupies residues 211–239 (KGKKDKEDEEAEKGTSVASPTTATGGTKK). Polar residues predominate over residues 226–239 (SVASPTTATGGTKK).

It belongs to the bacterial ribosomal protein bL25 family. CTC subfamily. Part of the 50S ribosomal subunit; part of the 5S rRNA/L5/L18/L25 subcomplex. Contacts the 5S rRNA. Binds to the 5S rRNA independently of L5 and L18.

This is one of the proteins that binds to the 5S RNA in the ribosome where it forms part of the central protuberance. The chain is Large ribosomal subunit protein bL25 from Endomicrobium trichonymphae.